Consider the following 224-residue polypeptide: Ribonuclease T (224 aa).

The region spanning 20 to 194 is the Exonuclease domain; sequence VVIDVETAGF…YDTERTAELF (175 aa). 4 residues coordinate Mg(2+): Asp-23, Glu-25, His-181, and Asp-186. Residue His-181 is the Proton donor/acceptor of the active site.

This sequence belongs to the RNase T family. Homodimer. Mg(2+) is required as a cofactor.

In terms of biological role, trims short 3' overhangs of a variety of RNA species, leaving a one or two nucleotide 3' overhang. Responsible for the end-turnover of tRNA: specifically removes the terminal AMP residue from uncharged tRNA (tRNA-C-C-A). Also appears to be involved in tRNA biosynthesis. The chain is Ribonuclease T from Enterobacter sp. (strain 638).